The chain runs to 208 residues: Small ribosomal subunit protein uS9c (208 aa).

The N-terminal 51 residues, 1 to 51 (MAVSISSLTSSFASLSFTSNLTPKPQTLPMARTKPFSLSNPAVVKPLVITA), are a transit peptide targeting the chloroplast. T52 carries the post-translational modification N-acetylthreonine. Residues 185–208 (DSRIVERKKPGLKKARKAPQFSKR) are disordered. Basic residues predominate over residues 194 to 208 (PGLKKARKAPQFSKR).

As to quaternary structure, component of the chloroplast small ribosomal subunit (SSU). Mature 70S chloroplast ribosomes of higher plants consist of a small (30S) and a large (50S) subunit. The 30S small subunit contains 1 molecule of ribosomal RNA (16S rRNA) and 24 different proteins. The 50S large subunit contains 3 rRNA molecules (23S, 5S and 4.5S rRNA) and 33 different proteins. uS9c binds directly to 16S ribosomal RNA. uS9c interacts with translation factor pY (PSRP1).

The protein localises to the plastid. Its subcellular location is the chloroplast. Component of the chloroplast ribosome (chloro-ribosome), a dedicated translation machinery responsible for the synthesis of chloroplast genome-encoded proteins, including proteins of the transcription and translation machinery and components of the photosynthetic apparatus. This Spinacia oleracea (Spinach) protein is Small ribosomal subunit protein uS9c (PRPS9).